The chain runs to 330 residues: Protein pelota homolog (330 aa).

The protein belongs to the eukaryotic release factor 1 family. Pelota subfamily. In terms of assembly, monomer. A divalent metal cation serves as cofactor.

The protein localises to the cytoplasm. Functionally, may function in recognizing stalled ribosomes, interact with stem-loop structures in stalled mRNA molecules, and effect endonucleolytic cleavage of the mRNA. May play a role in the release non-functional ribosomes and degradation of damaged mRNAs. Has endoribonuclease activity. This is Protein pelota homolog from Pyrobaculum islandicum (strain DSM 4184 / JCM 9189 / GEO3).